The primary structure comprises 298 residues: Mitochondrial substrate carrier family protein N (298 aa).

At 1–13 the chain is on the mitochondrial intermembrane side; that stretch reads MAGDLTPSLFLKY. Solcar repeat units follow at residues 8-92, 104-188, and 207-290; these read SLFL…FKKT, FRIP…TAEN, and QKLS…IKQM. A helical transmembrane segment spans residues 14–34; that stretch reads GFGGALSCSITHSLVVPLDVV. Residues 35-60 are Mitochondrial matrix-facing; sequence KTLLQTNPGKYTGMMNGFSTVIKEQG. The chain crosses the membrane as a helical span at residues 61–81; that stretch reads PSGLLQGLGPTAVGYALQGFL. The Mitochondrial intermembrane portion of the chain corresponds to 82–105; it reads KFGFYEVFKKTYADAVGEKADQFR. Residues 106-126 form a helical membrane-spanning segment; the sequence is IPIWLAASATAEVIADIALCP. The Mitochondrial matrix portion of the chain corresponds to 127-162; sequence NEAVRIRLVAEPTFAKSPVEAFGKIFKQEGVLGFYK. Residues 163 to 179 form a helical membrane-spanning segment; it reads GLPPILLKQVPYTMAKF. Residues 180-208 lie on the Mitochondrial intermembrane side of the membrane; the sequence is AVFEFTAENVYKGLAASGKPKESLTDGQK. Residues 209–229 traverse the membrane as a helical segment; the sequence is LSVSLGSGIVAGIVAAIVSQP. At 230–262 the chain is on the mitochondrial matrix side; that stretch reads ADTILSKINQEKTDGGVVKAIGNIMRRLGVRGL. A helical transmembrane segment spans residues 263 to 283; that stretch reads FLGLPTRCFMVGTLTAGQFFI. Residues 284–298 are Mitochondrial intermembrane-facing; that stretch reads YDGIKQMLGLTPAKK.

This sequence belongs to the mitochondrial carrier (TC 2.A.29) family.

It is found in the mitochondrion inner membrane. Functionally, mitochondrial solute carriers shuttle metabolites, nucleotides, and cofactors through the mitochondrial inner membrane. Transports phosphate groups from the cytosol to the mitochondrial matrix. Phosphate is cotransported with H(+). This chain is Mitochondrial substrate carrier family protein N (mcfN), found in Dictyostelium discoideum (Social amoeba).